A 316-amino-acid polypeptide reads, in one-letter code: MSIKEQTLMTPYLQFDRNQWAALRDSVPMTLSEDEIARLKGINEDLSLEEVAEIYLPLSRLLNFYISSNLRRQAVLEQFLGTNGQRIPYIISIAGSVAVGKSTTARVLQALLSRWPEHRRVELITTDGFLHPNQVLKERGLMKKKGFPESYDMHRLVKFVSDLKSGVPNVTAPVYSHLIYDVIPDGDKTVVQPDILILEGLNVLQSGMDYPHDPHHVFVSDFVDFSIYVDAPEDLLQTWYINRFLKFREGAFTDPDSYFHNYAKLTKEEAIKTAMTLWKEINWLNLKQNILPTRERASLILTKSANHAVEEVRLRK.

Residue 95–102 (GSVAVGKS) coordinates ATP.

Belongs to the prokaryotic pantothenate kinase family.

Its subcellular location is the cytoplasm. The enzyme catalyses (R)-pantothenate + ATP = (R)-4'-phosphopantothenate + ADP + H(+). The protein operates within cofactor biosynthesis; coenzyme A biosynthesis; CoA from (R)-pantothenate: step 1/5. This is Pantothenate kinase from Shigella sonnei (strain Ss046).